A 221-amino-acid chain; its full sequence is Ethylene-inducing xylanase 4 (221 aa).

Positions 1–19 (MVSFSTLLTACTAITGALG) are cleaved as a signal peptide. One can recognise a GH11 domain in the interval 28–218 (NVTPNAQGTH…SAGRASVVVE (191 aa)). A glycan (N-linked (GlcNAc...) asparagine) is linked at N96. The Nucleophile role is filled by E114. The active-site Proton donor is E205.

It belongs to the glycosyl hydrolase 11 (cellulase G) family.

It catalyses the reaction Endohydrolysis of (1-&gt;4)-beta-D-xylosidic linkages in xylans.. It functions in the pathway glycan degradation; xylan degradation. Endo-1,4-beta-xylanase involved in the hydrolysis of xylan, a major structural heterogeneous polysaccharide found in plant biomass representing the second most abundant polysaccharide in the biosphere, after cellulose. May act as an elicitor of plant defense responses in certain plants but does not exhibit any cell death when transiently expressed in N.benthamiana. In Verticillium dahliae (strain VdLs.17 / ATCC MYA-4575 / FGSC 10137) (Verticillium wilt), this protein is Ethylene-inducing xylanase 4.